The sequence spans 329 residues: Probable quinone oxidoreductase (329 aa).

Ser-191 is subject to Phosphoserine.

The protein belongs to the zinc-containing alcohol dehydrogenase family. Quinone oxidoreductase subfamily.

It is found in the cytoplasm. Its subcellular location is the nucleus. The catalysed reaction is 2 a quinone + NADPH + H(+) = 2 a 1,4-benzosemiquinone + NADP(+). In Schizosaccharomyces pombe (strain 972 / ATCC 24843) (Fission yeast), this protein is Probable quinone oxidoreductase (zta1).